Consider the following 100-residue polypeptide: MNADPVLSYNFDAIEYSVRQEIHTTAARFNAALQELRSQIAPLQQLWTREAAAAYHAEQLKWHQAASALNEILIDLGNAVRHGADDVAHADRRAAGAWAR.

The protein belongs to the WXG100 family. ESAT-6 subfamily. In terms of assembly, forms a tight 1:1 complex with EsxU.

The protein localises to the secreted. This chain is ESAT-6-like protein EsxT, found in Mycobacterium tuberculosis (strain CDC 1551 / Oshkosh).